The following is a 142-amino-acid chain: ATP synthase epsilon chain (142 aa).

The protein belongs to the ATPase epsilon chain family. F-type ATPases have 2 components, CF(1) - the catalytic core - and CF(0) - the membrane proton channel. CF(1) has five subunits: alpha(3), beta(3), gamma(1), delta(1), epsilon(1). CF(0) has three main subunits: a, b and c.

The protein localises to the cell inner membrane. Produces ATP from ADP in the presence of a proton gradient across the membrane. The polypeptide is ATP synthase epsilon chain (Shewanella pealeana (strain ATCC 700345 / ANG-SQ1)).